The primary structure comprises 160 residues: MSDNDDIEVESDEEQPRFQSAADKRAHHNALERKRRDHIKDSFHSLRDSVPSLQGEKASRAQILDKATEYIQYMRRKNHTHQQDIDDLKRQNALLEQQVRALEKARSSAQLQTNYPSSDNSLYTNAKGGTISAFDGGSDSSSESEPEEPQSRKKLRMEAS.

A compositionally biased stretch (acidic residues) spans 1-13 (MSDNDDIEVESDE). The interval 1 to 40 (MSDNDDIEVESDEEQPRFQSAADKRAHHNALERKRRDHIK) is disordered. At Ser2 the chain carries N-acetylserine. Residues Ser2 and Ser11 each carry the phosphoserine modification. Positions 23 to 74 (DKRAHHNALERKRRDHIKDSFHSLRDSVPSLQGEKASRAQILDKATEYIQYM) constitute a bHLH domain. A compositionally biased stretch (basic and acidic residues) spans 29-40 (NALERKRRDHIK). Lys66 bears the N6-acetyllysine mark. Residues 81–102 (HQQDIDDLKRQNALLEQQVRAL) are leucine-zipper. Residues 104-160 (KARSSAQLQTNYPSSDNSLYTNAKGGTISAFDGGSDSSSESEPEEPQSRKKLRMEAS) are disordered. Position 107 is a phosphoserine (Ser107). Residues 107-124 (SSAQLQTNYPSSDNSLYT) show a composition bias toward polar residues. 2 positions are modified to N6-acetyllysine: Lys153 and Lys154.

Belongs to the MAX family. In terms of assembly, efficient DNA binding requires dimerization with another bHLH protein. Binds DNA as a heterodimer with MYC or MAD. Part of the E2F6.com-1 complex in G0 phase composed of E2F6, MGA, MAX, TFDP1, CBX3, BAT8, EUHMTASE1, RING1, RNF2, MBLR, L3MBTL2 and YAF2. Component of some MLL1/MLL complex, at least composed of the core components KMT2A/MLL1, ASH2L, HCFC1/HCF1, WDR5 and RBBP5, as well as the facultative components BACC1, CHD8, E2F6, HSP70, INO80C, KANSL1, LAS1L, MAX, MCRS1, MGA, MYST1/MOF, PELP1, PHF20, PRP31, RING2, RUVB1/TIP49A, RUVB2/TIP49B, SENP3, TAF1, TAF4, TAF6, TAF7, TAF9 and TEX10. Interacts with SPAG9. The heterodimer MYC:MAX interacts with ABI1; the interaction may enhance MYC:MAX transcriptional activity. Phosphorylated.

The protein resides in the nucleus. The protein localises to the cell projection. Its subcellular location is the dendrite. Its function is as follows. Transcription regulator. Forms a sequence-specific DNA-binding protein complex with MYC or MAD which recognizes the core sequence 5'-CAC[GA]TG-3'. The MYC:MAX complex is a transcriptional activator, whereas the MAD:MAX complex is a repressor. CpG methylation of the recognition site greatly inhibits DNA binding, suggesting that DNA methylation may regulate the MYC:MAX complex in vivo. May repress transcription via the recruitment of a chromatin remodeling complex containing H3 'Lys-9' histone methyltransferase activity. Represses MYC transcriptional activity from E-box elements. This is Protein max from Mus musculus (Mouse).